A 180-amino-acid chain; its full sequence is Der GTPase-activating protein YihI (180 aa).

Disordered stretches follow at residues 1–90 (MSRK…QERR) and 145–180 (EPEEDEDFTAPAVKGSRNDDDLLADFDDINFDDYKG). Residues 23-32 (NRTESDVEGR) are compositionally biased toward basic and acidic residues. A compositionally biased stretch (basic residues) spans 33-43 (LRKRAKKRKGL). 2 stretches are compositionally biased toward basic and acidic residues: residues 50-68 (SDAEEQKRQAAAQKRDPRL) and 80-90 (PVKKQTKQERR). The span at 165–180 (DLLADFDDINFDDYKG) shows a compositional bias: acidic residues.

It belongs to the YihI family. As to quaternary structure, interacts with Der.

Functionally, a GTPase-activating protein (GAP) that modifies Der/EngA GTPase function. May play a role in ribosome biogenesis. This Vibrio campbellii (strain ATCC BAA-1116) protein is Der GTPase-activating protein YihI.